The primary structure comprises 448 residues: Tubulin beta-1 chain (448 aa).

The GTP site is built by Gln11, Glu69, Ser138, Gly142, Thr143, Gly144, Asn204, and Asn226. Glu69 is a Mg(2+) binding site. The tract at residues 428-448 (AGIGDDEEEDEEGVMGEEIDA) is disordered. The span at 430–448 (IGDDEEEDEEGVMGEEIDA) shows a compositional bias: acidic residues.

The protein belongs to the tubulin family. Dimer of alpha and beta chains. A typical microtubule is a hollow water-filled tube with an outer diameter of 25 nm and an inner diameter of 15 nM. Alpha-beta heterodimers associate head-to-tail to form protofilaments running lengthwise along the microtubule wall with the beta-tubulin subunit facing the microtubule plus end conferring a structural polarity. Microtubules usually have 13 protofilaments but different protofilament numbers can be found in some organisms and specialized cells. It depends on Mg(2+) as a cofactor.

It is found in the cytoplasm. The protein localises to the cytoskeleton. Its function is as follows. Tubulin is the major constituent of microtubules, a cylinder consisting of laterally associated linear protofilaments composed of alpha- and beta-tubulin heterodimers. Microtubules grow by the addition of GTP-tubulin dimers to the microtubule end, where a stabilizing cap forms. Below the cap, tubulin dimers are in GDP-bound state, owing to GTPase activity of alpha-tubulin. The sequence is that of Tubulin beta-1 chain (TUB-1) from Echinococcus multilocularis (Fox tapeworm).